The chain runs to 202 residues: CASP-like protein 1E1 (202 aa).

The Cytoplasmic segment spans residues 1–33; it reads MESQCRPNVDGVHNGVESHVKVVEKPRSVGSSS. The helical transmembrane segment at 34–54 threads the bilayer; sequence EFVLRILGLLLTLIAAVVAGV. The Extracellular segment spans residues 55–85; that stretch reads DKQTKIIPLTLIKTLPSLHVPVTAKWSDMSA. Residues 86 to 106 form a helical membrane-spanning segment; the sequence is FVYLVVSNAIACSYAAISLVL. The Cytoplasmic portion of the chain corresponds to 107-118; it reads VTMLGRRGKGGR. Residues 119–139 form a helical membrane-spanning segment; that stretch reads VLAVIVLDLHMVGLLFSANGA. The Extracellular segment spans residues 140–172; the sequence is ATAVGVLGQYGNSHVEWKKVCNVFDSFCHHLVA. Residues 173–193 traverse the membrane as a helical segment; sequence SLALSFLGSLSFLGLVLLAIL. The Cytoplasmic portion of the chain corresponds to 194–202; that stretch reads NLHKKSSTK.

It belongs to the Casparian strip membrane proteins (CASP) family. Homodimer and heterodimers.

It localises to the cell membrane. In Vitis vinifera (Grape), this protein is CASP-like protein 1E1.